The primary structure comprises 207 residues: SPRY domain-containing protein 4 (207 aa).

Residues 12-207 (YRWGTKRWGV…HSGLEVPKGL (196 aa)) form the B30.2/SPRY domain. N6-acetyllysine occurs at positions 53 and 130. At Lys-139 the chain carries N6-succinyllysine.

This chain is SPRY domain-containing protein 4 (Spryd4), found in Rattus norvegicus (Rat).